A 1771-amino-acid polypeptide reads, in one-letter code: Fatty acid synthase alpha subunit pkiB (1771 aa).

The segment covering 108–130 has biased composition (polar residues); that stretch reads SQPTQPQFEPTSPSHLTKRSPSP. The interval 108–133 is disordered; the sequence is SQPTQPQFEPTSPSHLTKRSPSPSKA. The Carrier domain occupies 143–221; it reads ELTLQAGHVI…ESFQPEFSGI (79 aa). Residue Ser181 is modified to O-(pantetheine 4'-phosphoryl)serine. Positions 575–771 are beta-ketoacyl reductase; it reads HKAVLVTGAG…CGAVIGWTRG (197 aa). In terms of domain architecture, Ketosynthase family 3 (KS3) spans 1011-1531; sequence KELLHEVAVE…QKGAINIMVS (521 aa). Active-site for beta-ketoacyl synthase activity residues include Cys1197, His1416, and His1457. The Mg(2+) site is built by Asp1650, Val1651, and Glu1652. Acetyl-CoA contacts are provided by residues 1650 to 1652, Tyr1676, Ser1686, 1695 to 1705, 1719 to 1722, and 1753 to 1755; these read DVE, EAAFKSLQTTS, EVGG, and ISH. Positions 1754 and 1755 each coordinate Mg(2+).

This sequence belongs to the thiolase-like superfamily. Fungal fatty acid synthetase subunit alpha family. As to quaternary structure, [Alpha(6)beta(6)] hexamers of two multifunctional subunits (alpha and beta).

It catalyses the reaction acetyl-CoA + n malonyl-CoA + 2n NADPH + 4n H(+) = a long-chain-acyl-CoA + n CoA + n CO2 + 2n NADP(+).. It carries out the reaction a fatty acyl-[ACP] + malonyl-[ACP] + H(+) = a 3-oxoacyl-[ACP] + holo-[ACP] + CO2. The catalysed reaction is a (3R)-hydroxyacyl-[ACP] + NADP(+) = a 3-oxoacyl-[ACP] + NADPH + H(+). It functions in the pathway secondary metabolite biosynthesis. Fatty acid synthase alpha subunit; part of the pki gene cluster that mediates the biosynthesis of 2,4-dihydroxy-3-methyl-6-(2-oxoundecyl)benzaldehyde. The first step in the pathway is the generation of the decanoyl starter unit by the FAS composed of subunits pkiB and pkiC, which is then transferred directly from the FAS to the SAT domain of the non-reducing polyketide synthase pkiA. PkiA condenses the decanoyyl starter unit with 4 malonyl-CoA units and performs one methylation step to yield 2,4-dihydroxy-3-methyl-6-(2-oxoundecyl)benzaldehyde. The protein is Fatty acid synthase alpha subunit pkiB of Emericella nidulans (strain FGSC A4 / ATCC 38163 / CBS 112.46 / NRRL 194 / M139) (Aspergillus nidulans).